The following is a 154-amino-acid chain: Cold shock domain-containing protein C2 (154 aa).

Disordered stretches follow at residues 1-22 (MTSE…SPVW) and 36-62 (ERGG…SATA). Ser19 carries the post-translational modification Phosphoserine. A CSD domain is found at 69–136 (VFKGVCKQFS…KFQAVEVVLT (68 aa)).

Brain-specific. Expression restricted to the pyramidal neurons of the cerebral cortex and in the Purkinje cells of the cerebellum.

The protein resides in the nucleus. It localises to the cytoplasm. RNA-binding factor which binds specifically to the very 3'-UTR ends of both histone H1 and H3.3 mRNAs, encompassing the polyadenylation signal. Might play a central role in the negative regulation of histone variant synthesis in the developing brain. This Rattus norvegicus (Rat) protein is Cold shock domain-containing protein C2 (Csdc2).